Here is a 160-residue protein sequence, read N- to C-terminus: Protein-export protein SecB (160 aa).

The protein belongs to the SecB family. As to quaternary structure, homotetramer, a dimer of dimers. One homotetramer interacts with 1 SecA dimer.

The protein resides in the cytoplasm. In terms of biological role, one of the proteins required for the normal export of preproteins out of the cell cytoplasm. It is a molecular chaperone that binds to a subset of precursor proteins, maintaining them in a translocation-competent state. It also specifically binds to its receptor SecA. This chain is Protein-export protein SecB, found in Aliivibrio salmonicida (strain LFI1238) (Vibrio salmonicida (strain LFI1238)).